The following is a 485-amino-acid chain: NADH-quinone oxidoreductase subunit N (485 aa).

14 helical membrane-spanning segments follow: residues Ile-10–Leu-30, Ile-40–Ile-60, Val-71–Val-91, Gly-107–His-127, Leu-129–Ile-149, Phe-164–Met-184, Phe-209–Pro-229, Ile-248–Gly-268, Trp-276–Leu-296, Leu-304–Pro-324, Val-336–Gly-356, Ala-377–Ile-397, Gly-410–Val-430, and Leu-454–Leu-474.

Belongs to the complex I subunit 2 family. NDH-1 is composed of 14 different subunits. Subunits NuoA, H, J, K, L, M, N constitute the membrane sector of the complex.

It localises to the cell inner membrane. The catalysed reaction is a quinone + NADH + 5 H(+)(in) = a quinol + NAD(+) + 4 H(+)(out). Functionally, NDH-1 shuttles electrons from NADH, via FMN and iron-sulfur (Fe-S) centers, to quinones in the respiratory chain. The immediate electron acceptor for the enzyme in this species is believed to be ubiquinone. Couples the redox reaction to proton translocation (for every two electrons transferred, four hydrogen ions are translocated across the cytoplasmic membrane), and thus conserves the redox energy in a proton gradient. The sequence is that of NADH-quinone oxidoreductase subunit N from Francisella tularensis subsp. holarctica (strain FTNF002-00 / FTA).